A 741-amino-acid polypeptide reads, in one-letter code: Catalase-peroxidase (741 aa).

Positions 86–208 form a cross-link, tryptophyl-tyrosyl-methioninium (Trp-Tyr) (with M-234); it reads WHSAGSYRIF…FAATEMGLIY (123 aa). Residue His87 is the Proton acceptor of the active site. A cross-link (tryptophyl-tyrosyl-methioninium (Tyr-Met) (with W-86)) is located at residues 208–234; that stretch reads YVNPEGPGGNPDPLGSAQEIRVAFRRM. Heme b is bound at residue His249.

It belongs to the peroxidase family. Peroxidase/catalase subfamily. As to quaternary structure, homodimer or homotetramer. Heme b is required as a cofactor. Post-translationally, formation of the three residue Trp-Tyr-Met cross-link is important for the catalase, but not the peroxidase activity of the enzyme.

The catalysed reaction is H2O2 + AH2 = A + 2 H2O. It catalyses the reaction 2 H2O2 = O2 + 2 H2O. In terms of biological role, bifunctional enzyme with both catalase and broad-spectrum peroxidase activity. Also displays NADH oxidase, INH lyase and isonicotinoyl-NAD synthase activities. The protein is Catalase-peroxidase of Archaeoglobus fulgidus (strain ATCC 49558 / DSM 4304 / JCM 9628 / NBRC 100126 / VC-16).